Consider the following 2334-residue polypeptide: Centriolin (2334 aa).

Residues 1 to 70 form a disordered region; the sequence is MKKGSERRLS…ESTVPLEPQQ (70 aa). Residues 21–38 show a composition bias toward low complexity; that stretch reads PGPSSLRSSMRSRSLSPL. 4 LRR repeats span residues 126–147, 148–169, 170–191, and 194–215; these read KLEVLNLSYNLIVKIEKVDKLL, RLRELNLSYNKISKIEGLENMC, NLQKLNLAGNEIEHIPVWFAKK, and SLRVLNLKGNKISSLQDVSKLK. Residues 228–266 form the LRRCT domain; it reads NPVVALPHYLQFIIFHLRSLESLEGQPVTTQDRQEAFER. Coiled-coil stretches lie at residues 265-343 and 437-800; these read ERFS…VELT and DLQL…LNHV. Disordered stretches follow at residues 542-562 and 751-771; these read DSLDPKDPKHSHMKAQKRGKE and SLRDALGKAQSSEEKQQENNE. Residue Ser-832 is modified to Phosphoserine. The stretch at 858–1102 forms a coiled coil; it reads EKEEAQVRER…ITRLRDVLNL (245 aa). Disordered stretches follow at residues 1154 to 1198, 1213 to 1245, and 1338 to 1360; these read SKVS…PLPA, KSFSKREDADSGGDSQEESGLDDQEEPPFVPPP, and LKSKQREERRQKASTQHSEEEVD. Acidic residues predominate over residues 1227–1238; sequence SQEESGLDDQEE. Positions 1320–2169 form a coiled coil; it reads EHHNLENEVS…MRTLKSEVKD (850 aa). Phosphoserine is present on Ser-1478. A required for centrosome localization region spans residues 1951-2121; the sequence is MMFQKLQKER…ELVAQDNHER (171 aa). Residues 1988–2334 form a sufficient for interaction with HOOK2 region; it reads QKSRLKQLLT…PLEEPNSYRH (347 aa). The span at 2291–2307 shows a compositional bias: low complexity; the sequence is TSTSTDSASSPSLPSLV. A disordered region spans residues 2291–2334; that stretch reads TSTSTDSASSPSLPSLVEDSQHGHSQSSFQVLQVPLEEPNSYRH.

In terms of assembly, interacts with HOOK2. Interacts with EXOC6 and SNAPIN. Associates with the exocyst complex. Highly expressed in liver.

It localises to the cytoplasm. The protein localises to the cytoskeleton. The protein resides in the microtubule organizing center. It is found in the centrosome. Its subcellular location is the midbody. It localises to the midbody ring. Its function is as follows. Involved in cell cycle progression and cytokinesis. During the late steps of cytokinesis, anchors exocyst and SNARE complexes at the midbody, thereby allowing secretory vesicle-mediated abscission. This chain is Centriolin (Cntrl), found in Mus musculus (Mouse).